Reading from the N-terminus, the 515-residue chain is 2,3-bisphosphoglycerate-independent phosphoglycerate mutase (515 aa).

2 residues coordinate Mn(2+): D14 and S63. S63 is a catalytic residue. Residues H124, 154–155 (RD), R186, R192, 259–262 (RADR), and K334 each bind substrate. Residues D401, H405, D442, H443, and H460 each contribute to the Mn(2+) site.

Belongs to the BPG-independent phosphoglycerate mutase family. It depends on Mg(2+) as a cofactor. Requires Mn(2+) as cofactor.

The catalysed reaction is (2R)-2-phosphoglycerate = (2R)-3-phosphoglycerate. It functions in the pathway carbohydrate degradation; glycolysis; pyruvate from D-glyceraldehyde 3-phosphate: step 3/5. Activity is not affected by 2,3-bisphosphoglycerate. Its function is as follows. Catalyzes the interconversion of 2-phosphoglycerate and 3-phosphoglycerate. The protein is 2,3-bisphosphoglycerate-independent phosphoglycerate mutase of Onchocerca volvulus.